We begin with the raw amino-acid sequence, 943 residues long: MPWTTTDYDPTDFANRRHIGPSPAEMAEMLEFVGADSLDALIDDTVPASIRQAGALDWAAMSEAELLDHMRAIADKNKPMVSMIGQGYFGTHTPPAIQRNVLENPAWYTAYTPYQPEIAQGRLEALLNFQTMVADLTGLPVANASLLDEATAAAEAMVMAQRASKSKARTFFVDETCHPQTIAVIQTRAEPLGIEVRVGDAAMLDADAVFGAIFQYPCTFGGLRDPSAQIEALHEAKAIAVVATDLLALTVLKEPGAMGADIAVGSAQRFGVPLGYGGPHAAFMSCRDALKRSLPGRIVGVSVDSHGQNAYRLSLQTREQHIRREKATSNVCTAQALLAVMASFYAVFHGPKGLRAIAERVHMRAVRLAASLSAGGFAPDNDTFFDTLTVHVGDKQSRIMAAAVARGINLRDVGADRIGISVDEVTTDAHIEAVCRAFGVLKAPAPKAPAISDDLLRMSDYLTHPIFHMNRAESEMMRYMRRLSDRDLALDRAMIPLGSCTMKLNAAVEMMPITWPEFGNLHPFAPADQAEGYAEMLEDLSAKLCDITGYDAMSMQPNSGAQGEYAGLLTIAAYHRARGETRNICLIPVSAHGTNPASAQMAGMQVVVVKSQEDGDIDLVDFRAKAEAAGDKLAACMITYPSTHGVFEESVREVCEITHELGGQVYLDGANLNAMVGLSKPGELGADVSHLNLHKTFCIPHGGGGPGMGPIGVKAHLAPHLPGHPETGGTQGPVSAAPYGSASILPISYAYVHLMGGSGLTQATKVAILGANYIAKRLEGDYGVLFKGKTGRVAHECILDTRPFAEAGITVDDIAKRLMDHGFHAPTMSWPVAGTLMVEPTESETKAELDRFITAMQAIRAEIAEVEDGLPAGDSPLHHAPHTMEDLVRDWDRAYTREQGCFPPGAFRVDKYWPPVNRVDNVAGDRNLICTCPPLEEYLDAAE.

Lysine 695 carries the post-translational modification N6-(pyridoxal phosphate)lysine.

It belongs to the GcvP family. As to quaternary structure, the glycine cleavage system is composed of four proteins: P, T, L and H. Requires pyridoxal 5'-phosphate as cofactor.

It carries out the reaction N(6)-[(R)-lipoyl]-L-lysyl-[glycine-cleavage complex H protein] + glycine + H(+) = N(6)-[(R)-S(8)-aminomethyldihydrolipoyl]-L-lysyl-[glycine-cleavage complex H protein] + CO2. In terms of biological role, the glycine cleavage system catalyzes the degradation of glycine. The P protein binds the alpha-amino group of glycine through its pyridoxal phosphate cofactor; CO(2) is released and the remaining methylamine moiety is then transferred to the lipoamide cofactor of the H protein. This Jannaschia sp. (strain CCS1) protein is Glycine dehydrogenase (decarboxylating).